Reading from the N-terminus, the 428-residue chain is Protein clpf-1 (428 aa).

Residues glutamate 16, arginine 56, and 124–129 (DVGKTT) contribute to the ATP site.

Belongs to the Clp1 family. Clp1 subfamily.

It is found in the nucleus. In terms of biological role, required for endonucleolytic cleavage during polyadenylation-dependent pre-mRNA 3'-end formation. In Caenorhabditis elegans, this protein is Protein clpf-1.